Consider the following 588-residue polypeptide: Protein kinase C iota type (588 aa).

In terms of domain architecture, PB1 spans 18–101; sequence QVRVKAYYRG…SELIIHVFPC (84 aa). Residues 133–183 form a Phorbol-ester/DAG-type zinc finger; that stretch reads GHAFQAKRFNRRAHCAICTDRIWGLGRQGYKCINCKLLVHKKCHKLVTVEC. Residues 194-213 form a disordered region; it reads GRIDPGSTHPEHPDQVLGKK. Residues 246–514 enclose the Protein kinase domain; it reads FDLLRVIGRG…FADIMAHPFF (269 aa). Residues 252-260 and Lys275 each bind ATP; that span reads IGRGSYAKV. Asp370 serves as the catalytic Proton acceptor. Thr404 and Thr556 each carry phosphothreonine. The region spanning 515 to 586 is the AGC-kinase C-terminal domain; the sequence is RNVDWDLMEQ…INPLLMSAEE (72 aa).

The protein belongs to the protein kinase superfamily. AGC Ser/Thr protein kinase family. PKC subfamily.

It catalyses the reaction L-seryl-[protein] + ATP = O-phospho-L-seryl-[protein] + ADP + H(+). The catalysed reaction is L-threonyl-[protein] + ATP = O-phospho-L-threonyl-[protein] + ADP + H(+). Its activity is regulated as follows. Exhibits an elevated basal enzymatic activity and is not regulated by diacylglycerol, phosphatidylserine, phorbol esters or calcium ions. Two specific sites, Thr-404 (activation loop of the kinase domain) and Thr-556 (turn motif), need to be phosphorylated for its full activation. Functionally, calcium- and diacylglycerol-independent serine/ threonine-protein kinase that plays a general protective role against apoptotic stimuli, is involved in NF-kappa-B activation, cell survival, differentiation and polarity, and contributes to the regulation of microtubule dynamics in the early secretory pathway. Is required for the formation and maintenance of the zonula adherens during early epithelial development and plays a critical role in organ morphogenesis and in regulating the orientation of cell division. Required for polarized epithelial organization, myocardium coherence and cell connectivity in the early somite stages. Required for heart cone tilt and development of circulatory architecture during embryogenesis. The chain is Protein kinase C iota type (prkci) from Danio rerio (Zebrafish).